The chain runs to 222 residues: Arginine ABC transporter permease protein ArtM (222 aa).

The Periplasmic segment spans residues 1-15; sequence MFEYLPELMKGLHTS. The 197-residue stretch at 12 to 208 folds into the ABC transmembrane type-1 domain; sequence LHTSLTLTVA…VVNGLLTLMM (197 aa). The chain crosses the membrane as a helical span at residues 16–36; it reads LTLTVASLIVALILALIFTII. At 37 to 49 the chain is on the cytoplasmic side; it reads LTLKTPVLVWLVR. The chain crosses the membrane as a helical span at residues 50-70; it reads GYITLFTGTPLLVQIFLIYYG. Topologically, residues 71–79 are periplasmic; sequence PGQFPTLQE. The chain crosses the membrane as a helical span at residues 80 to 100; it reads YPALWHLLSEPWLCALIALSL. At 101–154 the chain is on the cytoplasmic side; the sequence is NSAAYTTQLFYGAIRAIPEGQWQSCSALGMSKKDTLAILLPYAFKRSLSSYSNE. A helical transmembrane segment spans residues 155–175; it reads VVLVFKSTSLAYTITLMEVMG. At 176–186 the chain is on the periplasmic side; that stretch reads YSQLLYGRTYD. A helical transmembrane segment spans residues 187–207; it reads VMVFGAAGIIYLVVNGLLTLM. The Cytoplasmic segment spans residues 208-222; sequence MRLIERKALAFERRN.

The protein belongs to the binding-protein-dependent transport system permease family. HisMQ subfamily. As to quaternary structure, the complex is composed of two ATP-binding proteins (ArtP), two transmembrane proteins (ArtM and ArtQ) and two solute-binding proteins (ArtJ and ArtI).

The protein resides in the cell inner membrane. Functionally, part of the ABC transporter complex ArtPIQMJ involved in arginine transport. Probably responsible for the translocation of the substrate across the membrane. The sequence is that of Arginine ABC transporter permease protein ArtM (artM) from Escherichia coli (strain K12).